A 319-amino-acid chain; its full sequence is DNA-directed RNA polymerases II, IV and V subunit 3 (319 aa).

Methionine 1 carries the N-acetylmethionine modification.

This sequence belongs to the archaeal Rpo3/eukaryotic RPB3 RNA polymerase subunit family. As to quaternary structure, component of the RNA polymerase II complex consisting of at least 12 subunits. Interacts with SHH1, CLSY1, NRPB11 and NRPD1. Interacts with IYO.

The protein resides in the nucleus. Its function is as follows. DNA-dependent RNA polymerase catalyzes the transcription of DNA into RNA using the four ribonucleoside triphosphates as substrates. Component of RNA polymerase II which synthesizes mRNA precursors and many functional non-coding RNAs. Pol II is the central component of the basal RNA polymerase II transcription machinery. It is composed of mobile elements that move relative to each other. NRPB3 is part of the core element with the central large cleft and the clamp element that moves to open and close the cleft. Component of RNA polymerases IV and V which mediate short-interfering RNAs (siRNA) accumulation and subsequent RNA-directed DNA methylation-dependent (RdDM) transcriptional gene silencing (TGS) of endogenous repeated sequences, including transposable elements. The sequence is that of DNA-directed RNA polymerases II, IV and V subunit 3 (NRPB3) from Arabidopsis thaliana (Mouse-ear cress).